Reading from the N-terminus, the 222-residue chain is UPF0758 protein YicR (222 aa).

The region spanning 100-222 (PLLSPEMTRE…YVSFAERGWI (123 aa)) is the MPN domain. Residues histidine 171, histidine 173, and aspartate 184 each coordinate Zn(2+). The JAMM motif signature appears at 171–184 (HNHPSGCAEPSKAD).

Belongs to the UPF0758 family. YicR subfamily.

This chain is UPF0758 protein YicR, found in Escherichia coli O81 (strain ED1a).